A 128-amino-acid polypeptide reads, in one-letter code: MAKHSKSIPGRGLRVADQIQRDLSEIVAFELKDPRVGMITITEVQVTPDYAHAKVFFTMLSDNKDEIKNTVSGLSAASGYIRGQLGRRLSIHTLPELHFVHDTSTARGIEMSKLIDEANATRAKDAED.

The protein belongs to the RbfA family. As to quaternary structure, monomer. Binds 30S ribosomal subunits, but not 50S ribosomal subunits or 70S ribosomes.

It is found in the cytoplasm. One of several proteins that assist in the late maturation steps of the functional core of the 30S ribosomal subunit. Associates with free 30S ribosomal subunits (but not with 30S subunits that are part of 70S ribosomes or polysomes). Required for efficient processing of 16S rRNA. May interact with the 5'-terminal helix region of 16S rRNA. This Herminiimonas arsenicoxydans protein is Ribosome-binding factor A.